Reading from the N-terminus, the 95-residue chain is Osteocalcin (95 aa).

Residues 1-23 (MRTIFLLTLLTLAALCLSDLTDA) form the signal peptide. Residues 24–49 (KPSGPESDKAFMSKQEGNKVVNRLRR) constitute a propeptide that is removed on maturation. Residues 46 to 92 (RLRRYLGASVPSPDPLEPTREQCELNPACDELSDQYGLKTAYKRIYG) enclose the Gla domain. Ca(2+) is bound by residues E62, E66, E69, and D75. 4-carboxyglutamate occurs at positions 62, 66, and 69. A disulfide bridge links C68 with C74.

It belongs to the osteocalcin/matrix Gla protein family. Post-translationally, gamma-carboxyglutamate residues are formed by vitamin K dependent carboxylation by GGCX. These residues are essential for the binding of calcium. Carboxylated in a Ptprv/Esp-dependent process. Decarboxylation promotes the hormone activity. Bone.

Its subcellular location is the secreted. The carboxylated form is one of the main organic components of the bone matrix, which constitutes 1-2% of the total bone protein: it acts as a negative regulator of bone formation and is required to limit bone formation without impairing bone resorption or mineralization. The carboxylated form binds strongly to apatite and calcium. Functionally, the uncarboxylated form acts as a hormone secreted by osteoblasts, which regulates different cellular processes, such as energy metabolism, male fertility and brain development. Regulates of energy metabolism by acting as a hormone favoring pancreatic beta-cell proliferation, insulin secretion and sensitivity and energy expenditure. Uncarboxylated osteocalcin hormone also promotes testosterone production in the testes: acts as a ligand for G protein-coupled receptor GPRC6A at the surface of Leydig cells, initiating a signaling response that promotes the expression of enzymes required for testosterone synthesis in a CREB-dependent manner. Also acts as a regulator of brain development: osteocalcin hormone crosses the blood-brain barrier and acts as a ligand for GPR158 on neurons, initiating a signaling response that prevents neuronal apoptosis in the hippocampus, favors the synthesis of all monoamine neurotransmitters and inhibits that of gamma-aminobutyric acid (GABA). Osteocalcin also crosses the placenta during pregnancy and maternal osteocalcin is required for fetal brain development. The protein is Osteocalcin of Mus musculus (Mouse).